Consider the following 42-residue polypeptide: Photosystem I reaction center subunit IX (42 aa).

A helical membrane pass occupies residues 7–27 (YLSTAPVLAALSLGFLAGLLI).

Belongs to the PsaJ family.

The protein localises to the plastid. It is found in the chloroplast thylakoid membrane. Its function is as follows. May help in the organization of the PsaE and PsaF subunits. The protein is Photosystem I reaction center subunit IX of Cryptomeria japonica (Japanese cedar).